The sequence spans 345 residues: D-alanine--D-alanine ligase (345 aa).

The ATP-grasp domain occupies 133–340; it reads KLYAKERGVK…IDYRYIHQIQ (208 aa). 162 to 211 contributes to the ATP binding site; it reads PLIVKPLRLGSSIGVSIAKNRQELDYALDVAFEFDEAALLEPFMQGIKEY. Residues Asp284, Glu296, and Asn298 each coordinate Mg(2+).

This sequence belongs to the D-alanine--D-alanine ligase family. Mg(2+) is required as a cofactor. Requires Mn(2+) as cofactor.

The protein localises to the cytoplasm. The enzyme catalyses 2 D-alanine + ATP = D-alanyl-D-alanine + ADP + phosphate + H(+). It participates in cell wall biogenesis; peptidoglycan biosynthesis. Functionally, cell wall formation. This is D-alanine--D-alanine ligase from Wolinella succinogenes (strain ATCC 29543 / DSM 1740 / CCUG 13145 / JCM 31913 / LMG 7466 / NCTC 11488 / FDC 602W) (Vibrio succinogenes).